Consider the following 625-residue polypeptide: Keratin, type II cytoskeletal 1 (625 aa).

Positions 1 to 12 are enriched in low complexity; that stretch reads MSFQCSSRSLCR. The segment at 1–27 is disordered; the sequence is MSFQCSSRSLCRSGGGGGGRNFSSGSA. Residues 1–178 are head; the sequence is MSFQCSSRSL…DPQIQKVKSQ (178 aa). Residue arginine 12 is modified to Omega-N-methylarginine. Residues serine 23 and serine 26 each carry the phosphoserine modification. An Omega-N-methylarginine modification is found at arginine 51. A Phosphoserine modification is found at serine 69. Residues 171 to 319 adopt a coiled-coil conformation; it reads QIQKVKSQER…DIDFFSTLYQ (149 aa). The segment at 179-214 is coil 1A; the sequence is EREQIKSLNDKFASFIDKVRFLEQQNQVLQTKWELL. In terms of domain architecture, IF rod spans 179-492; the sequence is EREQIKSLND…KLLEGEEIRM (314 aa). The tract at residues 215–233 is linker 1; it reads QQVDTSTRTQNLDPFFESY. Positions 234-325 are coil 1B; it reads ISNLRRQVDS…TLYQMELSQM (92 aa). Lysine 275 carries the N6,N6-dimethyllysine modification. Positions 326–349 are linker 12; it reads QTQISETNVVLSMDNNRTLDLDGI. Positions 350-488 are coil 2; sequence IAEVKAQYDS…ATYRKLLEGE (139 aa). A coiled-coil region spans residues 388–475; sequence DSVKNTKMEI…ELMNTKLALD (88 aa). Positions 489 to 625 are tail; the sequence is EIRMSGECTP…VSTTYSRGTN (137 aa). 2 disordered regions span residues 496-525 and 560-625; these read CTPN…YGSG and SGGG…RGTN. The segment covering 500–515 has biased composition (low complexity); sequence VSVSVSTSHTSMSGTS. Gly residues-rich tracts occupy residues 516-525 and 560-606; these read SRGGGRYGSG and SGGG…GGVK. Arginine 517, arginine 574, and arginine 596 each carry omega-N-methylarginine. Polar residues predominate over residues 613 to 625; sequence VKFVSTTYSRGTN.

It belongs to the intermediate filament family. As to quaternary structure, heterotetramer of two type I and two type II keratins. Heterodimer with KRT10. Two heterodimers of KRT1 and KRT10 form a heterotetramer. Forms a heterodimer with KRT14; the interaction is more abundant in the absence of KRT5. Interacts with ITGB1 in the presence of RACK1 and SRC, and with RACK1. Interacts with C1QBP; the association represents a cell surface kininogen receptor. Interacts with EPPK1; interaction is dependent of higher-order structure of intermediate filament. Undergoes deimination of some arginine residues (citrullination).

It is found in the cell membrane. It localises to the cytoplasm. In terms of biological role, may regulate the activity of kinases such as PKC and SRC via binding to integrin beta-1 (ITB1) and the receptor of activated protein C kinase 1 (RACK1). In complex with C1QBP is a high affinity receptor for kininogen-1/HMWK. This is Keratin, type II cytoskeletal 1 from Rattus norvegicus (Rat).